The sequence spans 158 residues: Snaclec convulxin subunit alpha (158 aa).

An N-terminal signal peptide occupies residues 1-23 (MGRFIFVSFGLLVLFLSLSGTGA). Disulfide bonds link C27/C38, C55/C152, and C127/C144. Residues 34–158 (YDQHCYRIFN…PFVCKFPPQC (125 aa)) enclose the C-type lectin domain.

The protein belongs to the snaclec family. In terms of assembly, tetramer of heterodimers of alpha and beta subunits (alphabeta)(4); disulfide-linked. In terms of tissue distribution, expressed by the venom gland.

Its subcellular location is the secreted. Snake venom lectin that activates platelets by binding to the platelet collagen receptor glycoprotein VI (GP6). The indirect activation of integrin alpha-IIb/beta-3 (ITGA2B/ITGB3) also induced by the toxin is upstream the cytoskeletal translocation of GPIb, FcRgamma (FCER1G) and 14-3-3zeta (YWHAZ). The sequence is that of Snaclec convulxin subunit alpha from Crotalus durissus terrificus (South American rattlesnake).